We begin with the raw amino-acid sequence, 365 residues long: Forkhead box protein E4 (365 aa).

A compositionally biased stretch (basic and acidic residues) spans 1 to 13 (MDSPDSVRVKCES). The disordered stretch occupies residues 1–46 (MDSPDSVRVKCESKGSCSPEEGLNNGLPEEHNQASGGRRRKRPVQR). A DNA-binding region (fork-head) is located at residues 48 to 142 (KPPYSYIALI…DNGSFLRRRK (95 aa)).

In terms of tissue distribution, first expressed at the end of gastrulation (stage 13) in the anterior ectodermal placode. During intermediate neural plate stages (stages 14-16), expression expands to the presumptive nasal ectoderm (PNE) and the presumptive lens ectoderm (PLE). By stages 18-21, expression begins to deplete in the PNE, while intensifying in the PLE so that by late neural stages (stages 22), expression is restricted to the PLE. Throughout tailbud stages (stage 23-31), expression is maintained in the lens placode and lens vesicle. In the maturing lens (stage 32-onwards), expression is restricted to the anterior lens epithelium, where it remains during the tadpole stage. In tadpoles there is additional expression in the ventral midline of the pharynx. Expression continues in the adult eye.

It localises to the nucleus. Its function is as follows. Probable transcription factor. Mediates lens formation in the embryo by promoting the proliferation of the specified lens ectoderm and suppressing its terminal differentiation. The sequence is that of Forkhead box protein E4 from Xenopus laevis (African clawed frog).